A 286-amino-acid polypeptide reads, in one-letter code: Nucleoid occlusion protein (286 aa).

Residues 147–166 constitute a DNA-binding region (H-T-H motif); sequence EALAQRLGKNQSTVANKLRL.

It belongs to the ParB family.

It is found in the cytoplasm. The protein localises to the nucleoid. Functionally, effects nucleoid occlusion by binding relatively nonspecifically to DNA and preventing the assembly of the division machinery in the vicinity of the nucleoid, especially under conditions that disturb the cell cycle. It helps to coordinate cell division and chromosome segregation by preventing the formation of the Z ring through the nucleoid, which would cause chromosome breakage. In Oceanobacillus iheyensis (strain DSM 14371 / CIP 107618 / JCM 11309 / KCTC 3954 / HTE831), this protein is Nucleoid occlusion protein.